A 124-amino-acid chain; its full sequence is WAP four-disulfide core domain protein 2 (124 aa).

An N-terminal signal peptide occupies residues 1-27; sequence MPACRPGPLAGALLLGLLLLGLPRVPG. WAP domains follow at residues 29–73 and 74–123; these read EVEK…CHLP and NEKE…VTPI. Intrachain disulfides connect Cys36–Cys62, Cys45–Cys66, Cys49–Cys61, Cys55–Cys70, Cys80–Cys110, Cys93–Cys114, Cys97–Cys109, and Cys103–Cys119. N-linked (GlcNAc...) asparagine glycosylation is present at Asn44.

Homotrimer; disulfide-linked. Epididymis. Highest levels are found in the caput and proximal cauda regions. Lower levels in the distal cauda. Not detected in the efferent ducts.

The protein resides in the secreted. Its function is as follows. Broad range protease inhibitor. Possible function in sperm maturation. This chain is WAP four-disulfide core domain protein 2 (WFDC2), found in Canis lupus familiaris (Dog).